A 411-amino-acid polypeptide reads, in one-letter code: 1-deoxy-D-xylulose 5-phosphate reductoisomerase (411 aa).

NADPH-binding residues include Thr11, Gly12, Ser13, Ile14, and Asn124. Lys125 is a binding site for 1-deoxy-D-xylulose 5-phosphate. Glu126 contacts NADPH. Mn(2+) is bound at residue Asp150. Residues Ser151, Glu152, Ser186, and His209 each contribute to the 1-deoxy-D-xylulose 5-phosphate site. Glu152 contacts Mn(2+). Gly215 serves as a coordination point for NADPH. The 1-deoxy-D-xylulose 5-phosphate site is built by Ser222, Asn227, Lys228, and Glu231. Glu231 contacts Mn(2+).

The protein belongs to the DXR family. It depends on Mg(2+) as a cofactor. The cofactor is Mn(2+).

It carries out the reaction 2-C-methyl-D-erythritol 4-phosphate + NADP(+) = 1-deoxy-D-xylulose 5-phosphate + NADPH + H(+). Its pathway is isoprenoid biosynthesis; isopentenyl diphosphate biosynthesis via DXP pathway; isopentenyl diphosphate from 1-deoxy-D-xylulose 5-phosphate: step 1/6. In terms of biological role, catalyzes the NADPH-dependent rearrangement and reduction of 1-deoxy-D-xylulose-5-phosphate (DXP) to 2-C-methyl-D-erythritol 4-phosphate (MEP). This chain is 1-deoxy-D-xylulose 5-phosphate reductoisomerase, found in Psychrobacter sp. (strain PRwf-1).